The primary structure comprises 389 residues: MVDEKVIVDEVETRDAYRVAYVIHFLLGAGSLIPWNALITAVDYFGYLYPDKHVEKTFTVAYMSCSVLVLVLMMTWNTRMSYRVRMNLGFSMFIIAMMISPLIDWVWKGEKGENVSYMLMVGSVVLCGLADGVVGGSLIGSAGKLPRQYMQAIFAGTASSGIIISLLRIATKASLPQTPQGMRTSAHSYFIVSSTILLCCFISCNVLHKLPVMQQHLKFHQPLHSTLTIWMVGRKIKWPASGMLIIYSVTLSIFPGFIAENLKSQLLQSWYPILLITVYNISDFVGKSLTALYLWQSIKSATWACIVRLLFYPLFSACLRGPKWLRTEVPVVVLTFMLGLTNGYLTSVLMIMAPKTVHASEAELAAIFMVVFLGLGLVCGSVIGWLWLI.

The next 10 helical transmembrane spans lie at 19–39, 57–77, 87–107, 119–139, 150–170, 187–207, 238–258, 266–286, 331–351, and 367–387; these read VAYVIHFLLGAGSLIPWNALI, TFTVAYMSCSVLVLVLMMTWN, NLGFSMFIIAMMISPLIDWVW, LMVGSVVLCGLADGVVGGSLI, MQAIFAGTASSGIIISLLRIA, HSYFIVSSTILLCCFISCNVL, WPASGMLIIYSVTLSIFPGFI, LLQSWYPILLITVYNISDFVG, VVVLTFMLGLTNGYLTSVLMI, and IFMVVFLGLGLVCGSVIGWLW.

This sequence belongs to the SLC29A/ENT transporter (TC 2.A.57) family. As to expression, expressed in stems, flowers and siliques.

The protein resides in the cell membrane. May be involved in nucleoside transport. This chain is Equilibrative nucleotide transporter 8 (ETN8), found in Arabidopsis thaliana (Mouse-ear cress).